Reading from the N-terminus, the 227-residue chain is Cytochrome c oxidase subunit 2 (227 aa).

Topologically, residues 1–14 (MAYPFQLGFQDATS) are mitochondrial intermembrane. Residues 15 to 45 (PIMEELLHFHDHTLMIVFLISSLVLYIISLM) traverse the membrane as a helical segment. Residues 46–59 (LTTKLTHTSTMDAQ) lie on the Mitochondrial matrix side of the membrane. Residues 60–87 (EVETIWTILPAIILILIALPSLRILYMM) form a helical membrane-spanning segment. Residues 88–227 (DEINNPSLTV…YFEKWSASML (140 aa)) are Mitochondrial intermembrane-facing. His161, Cys196, Glu198, Cys200, His204, and Met207 together coordinate Cu cation. Position 198 (Glu198) interacts with Mg(2+). Tyr218 is modified (phosphotyrosine).

This sequence belongs to the cytochrome c oxidase subunit 2 family. As to quaternary structure, component of the cytochrome c oxidase (complex IV, CIV), a multisubunit enzyme composed of 14 subunits. The complex is composed of a catalytic core of 3 subunits MT-CO1, MT-CO2 and MT-CO3, encoded in the mitochondrial DNA, and 11 supernumerary subunits COX4I, COX5A, COX5B, COX6A, COX6B, COX6C, COX7A, COX7B, COX7C, COX8 and NDUFA4, which are encoded in the nuclear genome. The complex exists as a monomer or a dimer and forms supercomplexes (SCs) in the inner mitochondrial membrane with NADH-ubiquinone oxidoreductase (complex I, CI) and ubiquinol-cytochrome c oxidoreductase (cytochrome b-c1 complex, complex III, CIII), resulting in different assemblies (supercomplex SCI(1)III(2)IV(1) and megacomplex MCI(2)III(2)IV(2)). Found in a complex with TMEM177, COA6, COX18, COX20, SCO1 and SCO2. Interacts with TMEM177 in a COX20-dependent manner. Interacts with COX20. Interacts with COX16. It depends on Cu cation as a cofactor.

It is found in the mitochondrion inner membrane. It carries out the reaction 4 Fe(II)-[cytochrome c] + O2 + 8 H(+)(in) = 4 Fe(III)-[cytochrome c] + 2 H2O + 4 H(+)(out). In terms of biological role, component of the cytochrome c oxidase, the last enzyme in the mitochondrial electron transport chain which drives oxidative phosphorylation. The respiratory chain contains 3 multisubunit complexes succinate dehydrogenase (complex II, CII), ubiquinol-cytochrome c oxidoreductase (cytochrome b-c1 complex, complex III, CIII) and cytochrome c oxidase (complex IV, CIV), that cooperate to transfer electrons derived from NADH and succinate to molecular oxygen, creating an electrochemical gradient over the inner membrane that drives transmembrane transport and the ATP synthase. Cytochrome c oxidase is the component of the respiratory chain that catalyzes the reduction of oxygen to water. Electrons originating from reduced cytochrome c in the intermembrane space (IMS) are transferred via the dinuclear copper A center (CU(A)) of subunit 2 and heme A of subunit 1 to the active site in subunit 1, a binuclear center (BNC) formed by heme A3 and copper B (CU(B)). The BNC reduces molecular oxygen to 2 water molecules using 4 electrons from cytochrome c in the IMS and 4 protons from the mitochondrial matrix. The polypeptide is Cytochrome c oxidase subunit 2 (MT-CO2) (Felis catus (Cat)).